A 572-amino-acid polypeptide reads, in one-letter code: Sulfite reductase [NADPH] hemoprotein beta-component (572 aa).

4 residues coordinate [4Fe-4S] cluster: Cys437, Cys443, Cys482, and Cys486. Siroheme is bound at residue Cys486.

The protein belongs to the nitrite and sulfite reductase 4Fe-4S domain family. As to quaternary structure, alpha(8)-beta(8). The alpha component is a flavoprotein, the beta component is a hemoprotein. Siroheme serves as cofactor. Requires [4Fe-4S] cluster as cofactor.

It carries out the reaction hydrogen sulfide + 3 NADP(+) + 3 H2O = sulfite + 3 NADPH + 4 H(+). The protein operates within sulfur metabolism; hydrogen sulfide biosynthesis; hydrogen sulfide from sulfite (NADPH route): step 1/1. Its function is as follows. Component of the sulfite reductase complex that catalyzes the 6-electron reduction of sulfite to sulfide. This is one of several activities required for the biosynthesis of L-cysteine from sulfate. This is Sulfite reductase [NADPH] hemoprotein beta-component from Staphylococcus epidermidis (strain ATCC 12228 / FDA PCI 1200).